A 773-amino-acid chain; its full sequence is DC-STAMP domain-containing protein 2 (773 aa).

Residues 1–26 lie on the Cytoplasmic side of the membrane; it reads MPKVMKDVVHPLGGEEPSMARAVVRS. A helical membrane pass occupies residues 27-47; that stretch reads VGGFTLGLSLATAYGLLELLV. At 48–51 the chain is on the extracellular side; sequence EGHS. Residues 52–72 form a helical membrane-spanning segment; it reads PWGCLVGTLTLAAFLSLGMGF. Over 73 to 233 the chain is Cytoplasmic; it reads SRQVRATVLL…IPQAYHLCYV (161 aa). Residues 234 to 254 form a helical membrane-spanning segment; sequence LMPFKLALCGLASLVQVFCVI. At 255 to 322 the chain is on the extracellular side; it reads PKYIQPFLRQ…SMKLHRVREA (68 aa). N-linked (GlcNAc...) asparagine glycans are attached at residues asparagine 284 and asparagine 296. The chain crosses the membrane as a helical span at residues 323–343; that stretch reads LALMGFTTPLLLVLLYLQALF. At 344–415 the chain is on the cytoplasmic side; sequence YRYCYLNWDH…ILETFNLIRH (72 aa). A helical transmembrane segment spans residues 416-436; sequence LLLVLFLVFLDYAVFWVLDLA. Residues 437 to 499 lie on the Extracellular side of the membrane; the sequence is RHQLQGEIVA…LRPSEPDSTG (63 aa). An N-linked (GlcNAc...) asparagine glycan is attached at asparagine 480. A helical membrane pass occupies residues 500–520; sequence YIVIGVMYGLCFFITLFGSYV. The Cytoplasmic portion of the chain corresponds to 521–773; the sequence is SRLRRVICAS…LPDPSHPPPK (253 aa). Low complexity predominate over residues 692-701; sequence SLSMESTSES. Positions 692–773 are disordered; that stretch reads SLSMESTSES…LPDPSHPPPK (82 aa). A compositionally biased stretch (pro residues) spans 758–773; that stretch reads PLSPPSLPDPSHPPPK.

Interacts with DCST1.

It localises to the cytoplasmic vesicle. It is found in the secretory vesicle. The protein localises to the acrosome membrane. Functionally, essential sperm cell-surface protein required for sperm-egg fusion and fertilization. This chain is DC-STAMP domain-containing protein 2 (DCST2), found in Homo sapiens (Human).